Reading from the N-terminus, the 636-residue chain is Epithelial sodium channel subunit alpha (636 aa).

Residues 1 to 28 are disordered; it reads MKSENQPEDKRIGKLKREANMQKMKEAA. Topologically, residues 1 to 77 are cytoplasmic; that stretch reads MKSENQPEDK…VCSKKNRMKT (77 aa). Residues 78–98 traverse the membrane as a helical segment; it reads AFWSILFFFTFGLMYWQFGII. At 99 to 549 the chain is on the extracellular side; that stretch reads YREYFSFPVN…SQWSLWFGSS (451 aa). 10 cysteine pairs are disulfide-bonded: Cys126–Cys293, Cys218–Cys225, Cys270–Cys277, Cys381–Cys466, Cys403–Cys443, Cys403–Cys462, Cys407–Cys458, Cys416–Cys443, Cys416–Cys466, and Cys418–Cys432. A helical membrane pass occupies residues 550-570; it reads VLSVVELVELILDFIAITCIL. Residues 571–636 are Cytoplasmic-facing; sequence AIHWLNMNRS…LRRVSSQQTE (66 aa).

Belongs to the amiloride-sensitive sodium channel (TC 1.A.6) family. SCNN1A subfamily. In terms of assembly, heterotrimer; containing an alpha/SCNN1A, a beta/SCNN1B and a gamma/SCNN1G subunit.

The protein localises to the apical cell membrane. It localises to the cell projection. Its subcellular location is the cilium. The protein resides in the cytoplasmic granule. It is found in the cytoplasm. The protein localises to the cytoplasmic vesicle. It localises to the secretory vesicle. Its subcellular location is the acrosome. The protein resides in the flagellum. It catalyses the reaction Na(+)(in) = Na(+)(out). Originally identified and characterized by its inhibition by the diuretic drug amiloride. This is one of the three pore-forming subunits of the heterotrimeric epithelial sodium channel (ENaC), a critical regulator of sodium balance and fluid homeostasis. ENaC operates in epithelial tissues, where it mediates the electrodiffusion of sodium ions from extracellular fluid through the apical membrane of cells, with water following osmotically. This Anolis carolinensis (Green anole) protein is Epithelial sodium channel subunit alpha.